The chain runs to 349 residues: Protein Wnt-7b (349 aa).

Residues 1–24 (MHRNFRKWIFYVFLCFGVIYVKLG) form the signal peptide. Disulfide bonds link C73/C84, C123/C131, C133/C152, C200/C214, and C202/C209. N-linked (GlcNAc...) asparagine glycosylation is found at N83 and N127. Residue S206 is the site of O-palmitoleoyl serine; by PORCN attachment. Residues 238 to 266 (VEVVRASRLRQPTFLKIKQIKSYQKPMET) are disordered linker. Disulfide bonds link C278–C309, C294–C304, C308–C348, C324–C339, C326–C336, and C331–C332. The N-linked (GlcNAc...) asparagine glycan is linked to N295.

The protein belongs to the Wnt family. Post-translationally, palmitoleoylation is required for efficient binding to frizzled receptors. Depalmitoleoylation leads to Wnt signaling pathway inhibition. As to expression, expressed in differentiating lens fiber cells.

The protein localises to the secreted. Its subcellular location is the extracellular space. It is found in the extracellular matrix. Its function is as follows. Ligand for members of the frizzled family of seven transmembrane receptors that functions in the canonical Wnt/beta-catenin signaling pathway. Required for normal fusion of the chorion and the allantois during placenta development. Required for central nervous system (CNS) angiogenesis and blood-brain barrier regulation. The chain is Protein Wnt-7b (WNT7B) from Gallus gallus (Chicken).